The chain runs to 945 residues: UvrABC system protein A (945 aa).

31 to 38 (GLSGSGKS) contacts ATP. A C4-type zinc finger spans residues 254-281 (CPVCGHSISELEPKLFSFNNPAGACPTC). 2 ABC transporter domains span residues 310 to 587 (WDRR…PDSL) and 607 to 937 (RDKK…HFLK). Position 640–647 (640–647 (GVSGSGKS)) interacts with ATP. A C4-type zinc finger spans residues 740-766 (CEACQGDGVIKVEMHFLPDIYVPCDVC).

The protein belongs to the ABC transporter superfamily. UvrA family. Forms a heterotetramer with UvrB during the search for lesions.

It is found in the cytoplasm. The UvrABC repair system catalyzes the recognition and processing of DNA lesions. UvrA is an ATPase and a DNA-binding protein. A damage recognition complex composed of 2 UvrA and 2 UvrB subunits scans DNA for abnormalities. When the presence of a lesion has been verified by UvrB, the UvrA molecules dissociate. The sequence is that of UvrABC system protein A from Pseudomonas aeruginosa (strain ATCC 15692 / DSM 22644 / CIP 104116 / JCM 14847 / LMG 12228 / 1C / PRS 101 / PAO1).